The following is a 336-amino-acid chain: Serpentine receptor class gamma-9 (336 aa).

7 consecutive transmembrane segments (helical) span residues 30-50, 64-84, 111-131, 152-172, 200-220, 237-257, and 271-291; these read LLQAAYMVPPAFLYARILYVI, FVIYSMDSIVGFILLLLDIFI, IYYPLLNYLHCAQPLIQIFLT, LSFIVAFVSLSPFLIIWNTII, FLFLVRSVAVIITVASTVIMF, LCLACVIHSICFMVPSFFEAL, and FLIQPFAWDVLNVGSPLIMIF.

The protein belongs to the nematode receptor-like protein srg family.

The protein localises to the membrane. This is Serpentine receptor class gamma-9 (srg-9) from Caenorhabditis elegans.